A 181-amino-acid polypeptide reads, in one-letter code: Organelle RRM domain-containing protein 6, chloroplastic (181 aa).

A chloroplast-targeting transit peptide spans 1 to 44 (MAISLGRVVVPSCTISGDRLFIPNFSAICSVSCGRINVGTGVIS). The 79-residue stretch at 77–155 (TKLYVSGLSF…RVIFVEEAKT (79 aa)) folds into the RRM domain. Residues 155 to 169 (TRSDMSRAKPRRDFP) are compositionally biased toward basic and acidic residues. A disordered region spans residues 155-181 (TRSDMSRAKPRRDFPKPQSKPRTFRTW).

As to quaternary structure, interacts with MORF8/RIP1, MORF2/RIP2, MORF9/RIP9 and VAR3/OZ1.

The protein localises to the plastid. It is found in the chloroplast. Involved in C-to-U editing of chloroplastic RNA. Required for the photosynthetic subunit psbF transcript editing in chloroplast. In Arabidopsis thaliana (Mouse-ear cress), this protein is Organelle RRM domain-containing protein 6, chloroplastic.